The chain runs to 461 residues: Ribulose bisphosphate carboxylase (461 aa).

Substrate is bound at residue Asn-112. Lys-167 serves as the catalytic Proton acceptor. Residue Lys-169 participates in substrate binding. Mg(2+) is bound by residues Lys-192, Asp-194, and Glu-195. The residue at position 192 (Lys-192) is an N6-carboxylysine. The active-site Proton acceptor is His-288. Positions 289, 322, and 369 each coordinate substrate.

Belongs to the RuBisCO large chain family. Type II subfamily. In terms of assembly, homodimer. Requires Mg(2+) as cofactor.

It carries out the reaction 2 (2R)-3-phosphoglycerate + 2 H(+) = D-ribulose 1,5-bisphosphate + CO2 + H2O. It catalyses the reaction D-ribulose 1,5-bisphosphate + O2 = 2-phosphoglycolate + (2R)-3-phosphoglycerate + 2 H(+). In terms of biological role, ruBisCO catalyzes two reactions: the carboxylation of D-ribulose 1,5-bisphosphate, the primary event in carbon dioxide fixation, as well as the oxidative fragmentation of the pentose substrate. Both reactions occur simultaneously and in competition at the same active site. The polypeptide is Ribulose bisphosphate carboxylase (Rhodopseudomonas palustris (strain BisB18)).